The following is an 876-amino-acid chain: Alanine--tRNA ligase (876 aa).

Zn(2+)-binding residues include H566, H570, C668, and H672.

The protein belongs to the class-II aminoacyl-tRNA synthetase family. The cofactor is Zn(2+).

The protein localises to the cytoplasm. The catalysed reaction is tRNA(Ala) + L-alanine + ATP = L-alanyl-tRNA(Ala) + AMP + diphosphate. Functionally, catalyzes the attachment of alanine to tRNA(Ala) in a two-step reaction: alanine is first activated by ATP to form Ala-AMP and then transferred to the acceptor end of tRNA(Ala). Also edits incorrectly charged Ser-tRNA(Ala) and Gly-tRNA(Ala) via its editing domain. This is Alanine--tRNA ligase from Petrotoga mobilis (strain DSM 10674 / SJ95).